The sequence spans 273 residues: MIERPVPGADAPIGIFDSGVGGLTVARTIIDQLPHESVIYIGDTANGPYGPLPIAKVREHAIRIADELVERGCKMIVIACNTASAAFLRDARERYSVPVVEVILPAVRRAVASTRNGKVGVIGTVGTINSGAYQDLFSASPSIVVNAVACPRFVDFVERGITSGRQILNIAQDYLEPLQAEGVDTLVLGCTHYPLLSGVIQLAMGDHVSLVSSAEETAKDVLRILSQQDLLADPDMHPEPSYSFESTGDPEIFAQLSRRFLGPIVSQVRQNEG.

Substrate is bound by residues 17-18 (DS) and 49-50 (YG). The Proton donor/acceptor role is filled by cysteine 80. 81–82 (NT) serves as a coordination point for substrate. The Proton donor/acceptor role is filled by cysteine 190. 191–192 (TH) is a binding site for substrate.

Belongs to the aspartate/glutamate racemases family.

The catalysed reaction is L-glutamate = D-glutamate. The protein operates within cell wall biogenesis; peptidoglycan biosynthesis. Provides the (R)-glutamate required for cell wall biosynthesis. This chain is Glutamate racemase, found in Corynebacterium glutamicum (strain ATCC 13032 / DSM 20300 / JCM 1318 / BCRC 11384 / CCUG 27702 / LMG 3730 / NBRC 12168 / NCIMB 10025 / NRRL B-2784 / 534).